The sequence spans 85 residues: Beta-toxin Ct6 (85 aa).

A signal peptide spans 1 to 18 (MKTFVLALCLVLIGMVYA). The 66-residue stretch at 19–84 (KDGYLVSKHT…VYPLPNKSCG (66 aa)) folds into the LCN-type CS-alpha/beta domain. 4 disulfides stabilise this stretch: cysteine 30–cysteine 83, cysteine 34–cysteine 59, cysteine 43–cysteine 64, and cysteine 47–cysteine 66. Cysteine 83 bears the Cysteine amide mark.

It belongs to the long (4 C-C) scorpion toxin superfamily. Sodium channel inhibitor family. Beta subfamily. As to expression, expressed by the venom gland.

It is found in the secreted. In terms of biological role, beta toxins bind voltage-independently at site-4 of sodium channels (Nav) and shift the voltage of activation toward more negative potentials thereby affecting sodium channel activation and promoting spontaneous and repetitive firing. The chain is Beta-toxin Ct6 from Centruroides tecomanus (Scorpion).